A 20-amino-acid chain; its full sequence is Putative beta-neurotoxin (20 aa).

Residues 1 to 20 (KDGYLVGSDGCKYSCLTRPG) form the LCN-type CS-alpha/beta domain.

As to expression, expressed by the venom gland.

It localises to the secreted. Functionally, beta toxins bind voltage-independently at site-4 of sodium channels (Nav) and shift the voltage of activation toward more negative potentials thereby affecting sodium channel activation and promoting spontaneous and repetitive firing. In Tityus pachyurus (Colombian scorpion), this protein is Putative beta-neurotoxin.